The chain runs to 550 residues: Hydroxylamine reductase (550 aa).

[2Fe-2S] cluster-binding residues include Cys3, Cys6, Cys18, and Cys25. 8 residues coordinate hybrid [4Fe-2O-2S] cluster: His249, Glu273, Cys317, Cys405, Cys433, Cys458, Glu492, and Lys494. A Cysteine persulfide modification is found at Cys405.

The protein belongs to the HCP family. Requires [2Fe-2S] cluster as cofactor. Hybrid [4Fe-2O-2S] cluster serves as cofactor.

It localises to the cytoplasm. The enzyme catalyses A + NH4(+) + H2O = hydroxylamine + AH2 + H(+). Catalyzes the reduction of hydroxylamine to form NH(3) and H(2)O. In Salmonella enteritidis PT4 (strain P125109), this protein is Hydroxylamine reductase.